The following is a 432-amino-acid chain: Cyclic 2,3-diphosphoglycerate synthetase (432 aa).

Belongs to the cyclic 2,3-diphosphoglycerate synthetase family.

The protein localises to the cytoplasm. The catalysed reaction is (2R)-2,3-bisphosphoglycerate + ATP + H(+) = cyclic (2R)-2,3-bisphosphoglycerate + ADP + phosphate. Catalyzes the formation of cyclic 2,3-diphosphoglycerate (cDPG) by formation of an intramolecular phosphoanhydride bond at the expense of ATP. The sequence is that of Cyclic 2,3-diphosphoglycerate synthetase from Thermococcus kodakarensis (strain ATCC BAA-918 / JCM 12380 / KOD1) (Pyrococcus kodakaraensis (strain KOD1)).